The primary structure comprises 457 residues: Allantoinase (457 aa).

Residues histidine 58, histidine 60, lysine 145, histidine 181, histidine 237, and aspartate 310 each coordinate Zn(2+). Position 145 is an N6-carboxylysine (lysine 145).

This sequence belongs to the metallo-dependent hydrolases superfamily. Allantoinase family. Homotetramer. The cofactor is Zn(2+). In terms of processing, carboxylation allows a single lysine to coordinate two zinc ions.

The enzyme catalyses (S)-allantoin + H2O = allantoate + H(+). It participates in nitrogen metabolism; (S)-allantoin degradation; allantoate from (S)-allantoin: step 1/1. Its function is as follows. Catalyzes the conversion of allantoin (5-ureidohydantoin) to allantoic acid by hydrolytic cleavage of the five-member hydantoin ring. The polypeptide is Allantoinase (Solibacter usitatus (strain Ellin6076)).